A 60-amino-acid polypeptide reads, in one-letter code: UPF0434 protein Aave_2563 (60 aa).

It belongs to the UPF0434 family.

This Paracidovorax citrulli (strain AAC00-1) (Acidovorax citrulli) protein is UPF0434 protein Aave_2563.